Reading from the N-terminus, the 276-residue chain is GPN-loop GTPase 3 (276 aa).

13 to 18 (SSGKST) lines the GTP pocket. The Gly-Pro-Asn (GPN)-loop; involved in dimer interface motif lies at 70–72 (GPN). 173 to 176 (SKMD) lines the GTP pocket. Positions 257 to 276 (EDQEPKDPDRFEADDLEDDE) are disordered. Positions 259–269 (QEPKDPDRFEA) are enriched in basic and acidic residues.

The protein belongs to the GPN-loop GTPase family. Heterodimers with gpn1 or gpn2. Binds to RNA polymerase II (RNAPII).

It is found in the cytoplasm. The protein localises to the nucleus. In terms of biological role, small GTPase required for proper nuclear import of RNA polymerase II and III (RNAPII and RNAPIII). May act at an RNAP assembly step prior to nuclear import. The sequence is that of GPN-loop GTPase 3 from Schizosaccharomyces pombe (strain 972 / ATCC 24843) (Fission yeast).